A 385-amino-acid polypeptide reads, in one-letter code: 8-amino-7-oxononanoate synthase (385 aa).

R21 serves as a coordination point for substrate. 108-109 (GF) serves as a coordination point for pyridoxal 5'-phosphate. H133 contacts substrate. Residues S179, H207, and T233 each coordinate pyridoxal 5'-phosphate. K236 is modified (N6-(pyridoxal phosphate)lysine). T352 contacts substrate.

It belongs to the class-II pyridoxal-phosphate-dependent aminotransferase family. BioF subfamily. Homodimer. Pyridoxal 5'-phosphate serves as cofactor.

It carries out the reaction 6-carboxyhexanoyl-[ACP] + L-alanine + H(+) = (8S)-8-amino-7-oxononanoate + holo-[ACP] + CO2. Its pathway is cofactor biosynthesis; biotin biosynthesis. Its function is as follows. Catalyzes the decarboxylative condensation of pimeloyl-[acyl-carrier protein] and L-alanine to produce 8-amino-7-oxononanoate (AON), [acyl-carrier protein], and carbon dioxide. The polypeptide is 8-amino-7-oxononanoate synthase (Salmonella agona (strain SL483)).